Consider the following 327-residue polypeptide: Tryptophan--tRNA ligase (327 aa).

ATP-binding positions include 9-11 (RPT) and 17-18 (GN). The short motif at 10-18 (PTGNLHLGN) is the 'HIGH' region element. D133 contacts L-tryptophan. Residues 145–147 (GKD), V186, and 194–198 (KMGKS) contribute to the ATP site. Positions 194-198 (KMGKS) match the 'KMSKS' region motif.

The protein belongs to the class-I aminoacyl-tRNA synthetase family. As to quaternary structure, homodimer.

It localises to the cytoplasm. It catalyses the reaction tRNA(Trp) + L-tryptophan + ATP = L-tryptophyl-tRNA(Trp) + AMP + diphosphate + H(+). Its function is as follows. Catalyzes the attachment of tryptophan to tRNA(Trp). This Porphyromonas gingivalis (strain ATCC BAA-308 / W83) protein is Tryptophan--tRNA ligase.